Reading from the N-terminus, the 288-residue chain is MFSWEASLSNELYFVRQYFYSGNYTKLFEIDTTSMSEKGLELTEIYMARAKLALGESLESIQSILTQKTPGSAAILALAGEGNMELIIDQHGNSDSVVQTLGAIFQIKNGSFDDAMDLLKKSVENLEAVALQVYIHLREHKIEAAEQTLKQALDWADEEIVLQLAQSWIKIVSGGVESYNDAFYVFEELNGTDSNPMTLTGMACADICLLRPEEALSSLKTALDSQPNYEEALSNMTTAITDLGPDAPSQAKNILSSFTNSSTLKLNDHLNEKAQEFDTFSTQFLSTA.

Position 262 is a phosphoserine (serine 262).

This sequence belongs to the COPE family. In terms of assembly, oligomeric complex that consists of at least the alpha, beta, beta', gamma, delta, epsilon and zeta subunits.

The protein resides in the cytoplasm. It localises to the golgi apparatus membrane. Its subcellular location is the cytoplasmic vesicle. It is found in the COPI-coated vesicle membrane. The coatomer is a cytosolic protein complex that binds to dilysine motifs and reversibly associates with Golgi non-clathrin-coated vesicles, which further mediate biosynthetic protein transport from the ER, via the Golgi up to the trans Golgi network. The coatomer complex is required for budding from Golgi membranes, and is essential for the retrograde Golgi-to-ER transport of dilysine-tagged proteins. In Schizosaccharomyces pombe (strain 972 / ATCC 24843) (Fission yeast), this protein is Probable coatomer subunit epsilon (sec28).